Reading from the N-terminus, the 358-residue chain is Aerobic magnesium-protoporphyrin IX monomethyl ester [oxidative] cyclase (358 aa).

This sequence belongs to the AcsF family. Requires Fe cation as cofactor.

It carries out the reaction Mg-protoporphyrin IX 13-monomethyl ester + 3 NADPH + 3 O2 + 2 H(+) = 3,8-divinyl protochlorophyllide a + 3 NADP(+) + 5 H2O. It participates in porphyrin-containing compound metabolism; chlorophyll biosynthesis. Catalyzes the formation of the isocyclic ring in chlorophyll biosynthesis in aerobic conditions. Mediates the cyclase reaction, which results in the formation of divinylprotochlorophyllide (Pchlide) characteristic of all chlorophylls from magnesium-protoporphyrin IX 13-monomethyl ester (MgPMME). In Rubrivivax gelatinosus (Rhodocyclus gelatinosus), this protein is Aerobic magnesium-protoporphyrin IX monomethyl ester [oxidative] cyclase.